We begin with the raw amino-acid sequence, 182 residues long: ATP-dependent protease subunit HslV (182 aa).

T9 is an active-site residue. The Na(+) site is built by A167, C170, and T173.

The protein belongs to the peptidase T1B family. HslV subfamily. As to quaternary structure, a double ring-shaped homohexamer of HslV is capped on each side by a ring-shaped HslU homohexamer. The assembly of the HslU/HslV complex is dependent on binding of ATP.

It is found in the cytoplasm. It carries out the reaction ATP-dependent cleavage of peptide bonds with broad specificity.. With respect to regulation, allosterically activated by HslU binding. Its function is as follows. Protease subunit of a proteasome-like degradation complex believed to be a general protein degrading machinery. This Enterococcus faecalis (strain ATCC 700802 / V583) protein is ATP-dependent protease subunit HslV.